Reading from the N-terminus, the 199-residue chain is Ribosomal RNA large subunit methyltransferase E (199 aa).

S-adenosyl-L-methionine contacts are provided by glycine 53, tryptophan 55, aspartate 73, aspartate 92, and aspartate 114. Lysine 154 acts as the Proton acceptor in catalysis.

Belongs to the class I-like SAM-binding methyltransferase superfamily. RNA methyltransferase RlmE family.

It localises to the cytoplasm. The enzyme catalyses uridine(2552) in 23S rRNA + S-adenosyl-L-methionine = 2'-O-methyluridine(2552) in 23S rRNA + S-adenosyl-L-homocysteine + H(+). Specifically methylates the uridine in position 2552 of 23S rRNA at the 2'-O position of the ribose in the fully assembled 50S ribosomal subunit. In Treponema denticola (strain ATCC 35405 / DSM 14222 / CIP 103919 / JCM 8153 / KCTC 15104), this protein is Ribosomal RNA large subunit methyltransferase E.